The sequence spans 452 residues: Ketoisovalerate reductase BEA2 (452 aa).

70–75 serves as a coordination point for NADP(+); that stretch reads GPGNIG. The active-site Proton donor is the Lys285. Positions 289, 293, and 393 each coordinate substrate. Residue Glu405 coordinates NADP(+).

It belongs to the ketopantoate reductase family.

The catalysed reaction is (R)-2-hydroxy-3-methylbutanoate + NADP(+) = 3-methyl-2-oxobutanoate + NADPH + H(+). In terms of biological role, ketoisovalerate reductase; part of the gene cluster that mediates the biosynthesis of beauvericin (BEA), a non-ribosomal cyclic hexadepsipeptide that shows antibiotic, antifungal, insecticidal, and cancer cell antiproliferative and antihaptotactic activity. Ketoisovalerate reductase BEA2 catalyzes the NADPH-specific reduction of ketoisovaleric acid to hydroxyisovalerate, a precursor for beauvericin biosynthesis. The nonribosomal cyclodepsipeptide synthetase BEA1 then catalyzes the formation of beauvericin via condensation and cyclization of 3 dipeptidol monomers, each composed of one unit of hydroxyisovalerate and one unit of N-methyl-phenylalanine. The protein is Ketoisovalerate reductase BEA2 of Gibberella fujikuroi (strain CBS 195.34 / IMI 58289 / NRRL A-6831) (Bakanae and foot rot disease fungus).